Here is a 101-residue protein sequence, read N- to C-terminus: NAD(P)H-quinone oxidoreductase subunit 4L, chloroplastic (101 aa).

Transmembrane regions (helical) follow at residues 2-22, 32-52, and 61-81; these read ILEH…YGLI, MCLE…SDFF, and IFCI…LAIV.

It belongs to the complex I subunit 4L family. NDH is composed of at least 16 different subunits, 5 of which are encoded in the nucleus.

The protein localises to the plastid. The protein resides in the chloroplast thylakoid membrane. It catalyses the reaction a plastoquinone + NADH + (n+1) H(+)(in) = a plastoquinol + NAD(+) + n H(+)(out). The enzyme catalyses a plastoquinone + NADPH + (n+1) H(+)(in) = a plastoquinol + NADP(+) + n H(+)(out). NDH shuttles electrons from NAD(P)H:plastoquinone, via FMN and iron-sulfur (Fe-S) centers, to quinones in the photosynthetic chain and possibly in a chloroplast respiratory chain. The immediate electron acceptor for the enzyme in this species is believed to be plastoquinone. Couples the redox reaction to proton translocation, and thus conserves the redox energy in a proton gradient. The protein is NAD(P)H-quinone oxidoreductase subunit 4L, chloroplastic of Draba nemorosa (Woodland whitlowgrass).